Consider the following 563-residue polypeptide: Chitinase A (563 aa).

A signal peptide spans 1–23 (MRKFNKPLLALLIGSTLCSAAQA). The GH18 domain maps to 158 to 559 (KVVGSYFVEW…NSMNASLGNS (402 aa)). The Proton donor role is filled by Glu-315.

It belongs to the glycosyl hydrolase 18 family. Chitinase class II subfamily.

It catalyses the reaction Random endo-hydrolysis of N-acetyl-beta-D-glucosaminide (1-&gt;4)-beta-linkages in chitin and chitodextrins.. The chain is Chitinase A (chiA) from Serratia marcescens.